We begin with the raw amino-acid sequence, 688 residues long: Probable glucan endo-1,3-beta-glucosidase btgC (688 aa).

3 disordered regions span residues 1-91 (MSGP…NLGP), 126-148 (ANIP…PEPP), and 168-195 (GQLT…IPYQ). Topologically, residues 1–307 (MSGPNRTYSF…PKPGGGNKKR (307 aa)) are cytoplasmic. Over residues 175 to 188 (SVSHLSSTNPSQRN) the composition is skewed to polar residues. The helical; Signal-anchor for type II membrane protein transmembrane segment at 308 to 328 (GWIVGAILAFIIIGAIVGGAV) threads the bilayer. The Extracellular portion of the chain corresponds to 329 to 688 (GGTIGHRGNE…IPDCGGKTAT (360 aa)). The interval 334-363 (HRGNEEPSSASSASSSSTQTATEDTSVNGD) is disordered. Low complexity predominate over residues 341 to 355 (SSASSASSSSTQTAT). Asparagine 408, asparagine 431, and asparagine 459 each carry an N-linked (GlcNAc...) asparagine glycan. The active-site Proton donor is glutamate 491. The active-site Nucleophile is the glutamate 590. Asparagine 609 and asparagine 635 each carry an N-linked (GlcNAc...) asparagine glycan.

This sequence belongs to the glycosyl hydrolase 17 family.

The protein resides in the cell membrane. It carries out the reaction Hydrolysis of (1-&gt;3)-beta-D-glucosidic linkages in (1-&gt;3)-beta-D-glucans.. Glucanases play a role in cell expansion during growth, in cell-cell fusion during mating, and in spore release during sporulation. This enzyme may be involved in beta-glucan degradation. Active on laminarin and lichenan. This is Probable glucan endo-1,3-beta-glucosidase btgC (btgC) from Aspergillus fumigatus (strain ATCC MYA-4609 / CBS 101355 / FGSC A1100 / Af293) (Neosartorya fumigata).